A 1392-amino-acid chain; its full sequence is MEVLMAERANLVFHNKAIDGTAMKRLISRLIEHFGMAYTSHILDQVKTLGFQQATATSISLGIDDLLTIPSKGWLVQDAEQQSLILEKHHHYGNVHAVEKLRQSIEIWYATSEYLRQEMNPNFRMTDPFNPVHIMSFSGARGNASQVHQLVGMRGLMSDPQGQMIDLPIQSNLREGLSLTEYIISCYGARKGVVDTAVRTSDAGYLTRRLVEVVQHIVVRRTDCGTARGISVSPRNGIMPERIFSQTLIGRVLADDIYMGSRCIATRNQAIGIGLVNRFITFRAQPISIRTPFTCRSTSWICRLCYGRSPTHGDLVELGEAVGIIAGQSIGEPGTQLTLRTFHTGGVFTGGTAEHVRAPSNGKIKFNEDLVHPTRTRHGHPAFLCSIDLYVTIESEDILHNVNIPPKSLLLVQNDQYVESEQVIAEIRAGISTLNFKEKVRKHIYSDSDGEMHWSTDVYHAPEFTYGNVHLLPKTSHLWILLGGPCRSSLVYLSIHKDQDQMNAHSLSGKPRYTSNLSVTNDQARQKLFSSDFYGQKEDRIPDYSDLNRIICTGQYNLVYSPILHGNSDLLSKRRRNKFIIPLHSIQELENELMPCSGISIEIPVNGIFRRNSILAYFDDPRYRRKSSGIIKYGTIETHSVIKKEDLIEYRGVKEFRPKYQMKVDRFFFIPEEVHILPGSSSIMVRNNSIVGVDTQITLNLRSRVGGLVRVERKKKRIELKIFSGDIHFPGETDKISRHTGVLIPPGTGKRNSKEYKKVKNWIYVQRITPSKKRFFVLVRPVVTYEITDGINLGTLFPPDPLQERDNVQLRIVNYILYGNGKPIRGISDTSIQLVRTCLVLNWNQDKKSSSCEEARASFVEIRTNGLIRHFLRINLVKSPISYIGKRNDPSGSGLLSDNGSDCTNINPFSAIYSYSKAKIQQSLNQPQGTIHTLLNRNKECQSLIILSAANCSRMEPFKDVKYHSVIKESIKKDPLIPIRNSLGPLGTCLPIENFYSSYHLITHNQILVTKYLQLDNLKQTFQVIKLKYYLMDENGKIFNPDPCRNIILNPFNLNWSFLHHNYCAETSKIISLGQFICENVCIAKNGPPLKSGQVILVQVDSIVIRSAKPYLATPGATVHGHYGETLYEGDTLVTFIYEKSRSGDITQGLPKVEQVLEVRSIDSISMNLEKRVESWNKCIPRILGIPWGFLIGAELTIAQSRISLVNKIQQVYRSQGVQIHNRHIEIIVRQITSKVLISEDGMSNVFSPGELIGLLRAERMGRALEEAICYRVVLLGITRASLNTQSFISEASFQETARVLAKAALRGRIDWLKGLKENVVLGGVIPVGTGFKGLVHPSKQHNNIPLETKKTNLFEGEMRDILFHHRKLFDSCLSKKFHDIPEQSFIGFNDS.

Positions 224, 295, 302, and 305 each coordinate Zn(2+).

Belongs to the RNA polymerase beta' chain family. RpoC2 subfamily. As to quaternary structure, in plastids the minimal PEP RNA polymerase catalytic core is composed of four subunits: alpha, beta, beta', and beta''. When a (nuclear-encoded) sigma factor is associated with the core the holoenzyme is formed, which can initiate transcription. The cofactor is Zn(2+).

The protein resides in the plastid. It localises to the chloroplast. The catalysed reaction is RNA(n) + a ribonucleoside 5'-triphosphate = RNA(n+1) + diphosphate. In terms of biological role, DNA-dependent RNA polymerase catalyzes the transcription of DNA into RNA using the four ribonucleoside triphosphates as substrates. The chain is DNA-directed RNA polymerase subunit beta'' from Solanum bulbocastanum (Wild potato).